Reading from the N-terminus, the 459-residue chain is uncharacterized protein (459 aa).

Helical transmembrane passes span 25 to 45 (SYGF…IYLL), 52 to 72 (AGIP…FAAI), 95 to 115 (PYLL…FLSP), 123 to 143 (LIYA…VNIP), 167 to 187 (IGSL…LVKF), 192 to 212 (VGYP…FYIC), 249 to 269 (VLMT…LVYF), 279 to 299 (LMAY…VFLP), 310 to 330 (TAMI…MLPS), 332 to 352 (VYVF…PNGI), 389 to 409 (SLSG…PNAV), and 420 to 440 (ALLL…IGFL).

The protein belongs to the sodium:galactoside symporter (TC 2.A.2) family.

The protein localises to the cell membrane. This is an uncharacterized protein from Bacillus subtilis (strain 168).